Consider the following 276-residue polypeptide: Pantothenate synthetase (276 aa).

27–34 (MGALHRGH) contacts ATP. Residue histidine 34 is the Proton donor of the active site. Glutamine 58 provides a ligand contact to (R)-pantoate. Glutamine 58 is a binding site for beta-alanine. 147–150 (GKKD) provides a ligand contact to ATP. Glutamine 153 is a (R)-pantoate binding site. ATP is bound by residues alanine 176 and 184–187 (LSSR).

Belongs to the pantothenate synthetase family. Homodimer.

The protein resides in the cytoplasm. It catalyses the reaction (R)-pantoate + beta-alanine + ATP = (R)-pantothenate + AMP + diphosphate + H(+). The protein operates within cofactor biosynthesis; (R)-pantothenate biosynthesis; (R)-pantothenate from (R)-pantoate and beta-alanine: step 1/1. Functionally, catalyzes the condensation of pantoate with beta-alanine in an ATP-dependent reaction via a pantoyl-adenylate intermediate. In Helicobacter pylori (strain P12), this protein is Pantothenate synthetase.